The primary structure comprises 198 residues: UPF0312 protein PFL_5802 (198 aa).

The first 23 residues, 1 to 23 (MLKKTLAALAIGSAVLAAGQVMA), serve as a signal peptide directing secretion.

It belongs to the UPF0312 family. Type 1 subfamily.

The protein localises to the periplasm. The polypeptide is UPF0312 protein PFL_5802 (Pseudomonas fluorescens (strain ATCC BAA-477 / NRRL B-23932 / Pf-5)).